Consider the following 199-residue polypeptide: Imidazoleglycerol-phosphate dehydratase (199 aa).

The protein belongs to the imidazoleglycerol-phosphate dehydratase family.

The protein localises to the cytoplasm. The catalysed reaction is D-erythro-1-(imidazol-4-yl)glycerol 3-phosphate = 3-(imidazol-4-yl)-2-oxopropyl phosphate + H2O. The protein operates within amino-acid biosynthesis; L-histidine biosynthesis; L-histidine from 5-phospho-alpha-D-ribose 1-diphosphate: step 6/9. The chain is Imidazoleglycerol-phosphate dehydratase from Methylibium petroleiphilum (strain ATCC BAA-1232 / LMG 22953 / PM1).